Consider the following 414-residue polypeptide: MIAIMVLMQLCISKIVVVDDLGVTDKQNRDPDIARKVMNVLGGTIKNSRDTVLLSNSKGTKRIVGDDENASSAYDRGSQGEAKLFAKTNDDNKTNGRETHLRPSPSKPEYTGRPTQNLQVEDPVPEIGRGYQESSLLNPLHTRSLFNGDDQQIQGRNMYERPSMQSYDPENLLTPYDSNQGKYIPFSFGGTGDSFTGAPGYTEAPLEDRMGFGMGGNRNLSDEARARKSFIILKMAQSKQKESMLQSSIDKLLQDIDQVAEKIQDTQKMKDGMMSRLHTKKNHLRNLQINIKEVEVQRGRTLALIRLSRNELLKLSKMIDDQRSKLALLEDEEKIFSDRIKKYDEEYDVGNRELQLDETRTEEIKRSIEELERMYNVLKIRNNELLNERNKESAIRNKLEMEVERFDRSAIDFI.

The segment at 87–117 (KTNDDNKTNGRETHLRPSPSKPEYTGRPTQN) is disordered. Residues 88–101 (TNDDNKTNGRETHL) are compositionally biased toward basic and acidic residues. A coiled-coil region spans residues 243–405 (SMLQSSIDKL…RNKLEMEVER (163 aa)).

This is an uncharacterized protein from Encephalitozoon cuniculi (strain GB-M1) (Microsporidian parasite).